Here is a 179-residue protein sequence, read N- to C-terminus: Large ribosomal subunit protein uL6 (179 aa).

It belongs to the universal ribosomal protein uL6 family. In terms of assembly, part of the 50S ribosomal subunit.

In terms of biological role, this protein binds to the 23S rRNA, and is important in its secondary structure. It is located near the subunit interface in the base of the L7/L12 stalk, and near the tRNA binding site of the peptidyltransferase center. The sequence is that of Large ribosomal subunit protein uL6 from Parasynechococcus marenigrum (strain WH8102).